The sequence spans 75 residues: MRLPAVTPGWPAIPPGATLGGFDGQGRRSWATISRAPSGASCSRNRSATRTYGWGATATTPATITGIPSTTAPAT.

Its function is as follows. Required for optimal exotoxin A production. The sequence is that of Protein RegB (regB) from Pseudomonas aeruginosa (strain ATCC 15692 / DSM 22644 / CIP 104116 / JCM 14847 / LMG 12228 / 1C / PRS 101 / PAO1).